The primary structure comprises 302 residues: Mitochondrial glycine transporter (302 aa).

3 Solcar repeats span residues 22–112, 119–203, and 213–297; these read HPVF…LKHH, PKPL…AKKL, and FSPV…MMEK. 6 helical membrane passes run 28 to 53, 87 to 113, 125 to 150, 178 to 201, 217 to 243, and 272 to 290; these read FVCGSLSGTCSTLLFQPLDLVKTRIQ, GVSPSFLRCIPGVGLYFSTLYTLKHHF, VMLGAGSRTVAAVCMLPFTVVKTRYE, GLTATLMRDAPFSGIYLMFYTRAK, LNFSCGIVAGILASVATQPADVIKTHM, and GGVPRALRRTLMAAMAWTV.

The protein belongs to the mitochondrial carrier (TC 2.A.29) family. SLC25A38 subfamily.

It localises to the mitochondrion inner membrane. It catalyses the reaction glycine(in) = glycine(out). In terms of biological role, mitochondrial glycine transporter that imports glycine into the mitochondrial matrix. Plays an important role in providing glycine for the first enzymatic step in heme biosynthesis, the condensation of glycine with succinyl-CoA to produce 5-aminolevulinate (ALA) in the mitochondrial matrix. Required during erythropoiesis. Functionally, may play a role as pro-apoptotic protein that induces caspase-dependent apoptosis. The sequence is that of Mitochondrial glycine transporter from Xenopus laevis (African clawed frog).